The sequence spans 477 residues: Ribulose bisphosphate carboxylase large chain (477 aa).

Residues 1–2 constitute a propeptide that is removed on maturation; the sequence is MS. At Pro3 the chain carries N-acetylproline. Lys14 is subject to N6,N6,N6-trimethyllysine. Asn123 and Thr173 together coordinate substrate. The active-site Proton acceptor is Lys175. Position 177 (Lys177) interacts with substrate. 3 residues coordinate Mg(2+): Lys201, Asp203, and Glu204. Residue Lys201 is modified to N6-carboxylysine. His294 (proton acceptor) is an active-site residue. Substrate contacts are provided by Arg295, His327, and Ser379.

This sequence belongs to the RuBisCO large chain family. Type I subfamily. In terms of assembly, heterohexadecamer of 8 large chains and 8 small chains; disulfide-linked. The disulfide link is formed within the large subunit homodimers. The cofactor is Mg(2+). The disulfide bond which can form in the large chain dimeric partners within the hexadecamer appears to be associated with oxidative stress and protein turnover.

The protein resides in the plastid. It localises to the chloroplast. It catalyses the reaction 2 (2R)-3-phosphoglycerate + 2 H(+) = D-ribulose 1,5-bisphosphate + CO2 + H2O. It carries out the reaction D-ribulose 1,5-bisphosphate + O2 = 2-phosphoglycolate + (2R)-3-phosphoglycerate + 2 H(+). Functionally, ruBisCO catalyzes two reactions: the carboxylation of D-ribulose 1,5-bisphosphate, the primary event in carbon dioxide fixation, as well as the oxidative fragmentation of the pentose substrate in the photorespiration process. Both reactions occur simultaneously and in competition at the same active site. The polypeptide is Ribulose bisphosphate carboxylase large chain (rbcL) (Solanum tuberosum (Potato)).